A 301-amino-acid polypeptide reads, in one-letter code: Cilia- and flagella-associated protein 161 (301 aa).

Its subcellular location is the cytoplasm. The protein resides in the cytoskeleton. It localises to the cilium axoneme. Its function is as follows. Microtubule inner protein (MIP) part of the dynein-decorated doublet microtubules (DMTs) in cilia axoneme, which is required for motile cilia beating. In Danio rerio (Zebrafish), this protein is Cilia- and flagella-associated protein 161.